A 105-amino-acid chain; its full sequence is Malonate decarboxylase acyl carrier protein (105 aa).

S28 is subject to O-(phosphoribosyl dephospho-coenzyme A)serine.

Belongs to the MdcC family. Post-translationally, covalently binds the prosthetic group of malonate decarboxylase.

The protein localises to the cytoplasm. In terms of biological role, subunit of malonate decarboxylase, it is an acyl carrier protein to which acetyl and malonyl thioester residues are bound via a 2'-(5''-phosphoribosyl)-3'-dephospho-CoA prosthetic group and turn over during the catalytic mechanism. The sequence is that of Malonate decarboxylase acyl carrier protein from Xanthomonas campestris pv. campestris (strain 8004).